The primary structure comprises 337 residues: L-Ala-D/L-amino acid epimerase (337 aa).

Residues Thr-129 and 151–153 each bind substrate; that span reads KIK. 3 residues coordinate Mg(2+): Asp-177, Glu-203, and Asp-228. Substrate-binding positions include Lys-250 and 300–302; that span reads DMD.

Belongs to the mandelate racemase/muconate lactonizing enzyme family. Requires Mg(2+) as cofactor.

Its function is as follows. Broad specificity dipeptide epimerase. Catalyzes the epimerization of L-Ala-L-Ala, L-Ala-L-Glu, L-Ala-L-Ser, L-Ala-L-Thr and L-Ala-L-Met (in vitro). The sequence is that of L-Ala-D/L-amino acid epimerase from Maribacter sp. (strain HTCC2170 / KCCM 42371).